The primary structure comprises 431 residues: Trigger factor (431 aa).

Residues 165-250 enclose the PPIase FKBP-type domain; that stretch reads TDTAVFDFEG…LHQIKTKKIP (86 aa).

The protein belongs to the FKBP-type PPIase family. Tig subfamily.

It localises to the cytoplasm. The catalysed reaction is [protein]-peptidylproline (omega=180) = [protein]-peptidylproline (omega=0). Functionally, involved in protein export. Acts as a chaperone by maintaining the newly synthesized protein in an open conformation. Functions as a peptidyl-prolyl cis-trans isomerase. The sequence is that of Trigger factor from Aster yellows witches'-broom phytoplasma (strain AYWB).